Here is a 162-residue protein sequence, read N- to C-terminus: NADH-quinone oxidoreductase subunit I (162 aa).

4Fe-4S ferredoxin-type domains are found at residues 53 to 83 (LRRY…IEAE) and 93 to 122 (TRYD…EGPN). [4Fe-4S] cluster contacts are provided by cysteine 63, cysteine 66, cysteine 69, cysteine 73, cysteine 102, cysteine 105, cysteine 108, and cysteine 112.

The protein belongs to the complex I 23 kDa subunit family. In terms of assembly, NDH-1 is composed of 14 different subunits. Subunits NuoA, H, J, K, L, M, N constitute the membrane sector of the complex. The cofactor is [4Fe-4S] cluster.

The protein localises to the cell inner membrane. The enzyme catalyses a quinone + NADH + 5 H(+)(in) = a quinol + NAD(+) + 4 H(+)(out). In terms of biological role, NDH-1 shuttles electrons from NADH, via FMN and iron-sulfur (Fe-S) centers, to quinones in the respiratory chain. The immediate electron acceptor for the enzyme in this species is believed to be ubiquinone. Couples the redox reaction to proton translocation (for every two electrons transferred, four hydrogen ions are translocated across the cytoplasmic membrane), and thus conserves the redox energy in a proton gradient. This chain is NADH-quinone oxidoreductase subunit I, found in Granulibacter bethesdensis (strain ATCC BAA-1260 / CGDNIH1).